A 396-amino-acid chain; its full sequence is MSQKWVQTQAWLGFPDVPISQEDKPDEYSTFLGGFPVFFDGCSLNPNIIKCGNCKNLCRLLLQCYAPLEGDNLKERALYVWGCHNPSCRRVPNSIVCVRGVRLPLKSDIEAVKSPKAISHLEEKKSSPKEKKVNPFAITSESSRGLNPFSDATSANNPFSLSTDVNPSKPSSNVFSKPSFAAKAQQSITDQQKTQAKTKTKHIALTTSGMSVHPPVTETYTYPVTEAFQGMFLGLDLEYVPQNKVNSKKDDFSTFKNYTPYLNDSSEAWEKESYEKSPSVYEKTFRLFSEKISHNPTQCLRYERGGTPLLASGRDKLGQQLKSVTNFGKSPVPLCPLCKSPRLFEMQLMPHAISILNDEIAEWSTILVATCSMDCNPPINKDRVGYAVEWVGIQWD.

Belongs to the TSR4 family.

It localises to the cytoplasm. It is found in the nucleus. Its subcellular location is the nucleolus. Its function is as follows. Required for processing of the 20S pre-rRNA at site D to generate mature 18S rRNA. The sequence is that of Probable 20S rRNA accumulation protein 4 from Schizosaccharomyces pombe (strain 972 / ATCC 24843) (Fission yeast).